Consider the following 101-residue polypeptide: Large ribosomal subunit protein uL24 (101 aa).

Belongs to the universal ribosomal protein uL24 family. As to quaternary structure, part of the 50S ribosomal subunit.

In terms of biological role, one of two assembly initiator proteins, it binds directly to the 5'-end of the 23S rRNA, where it nucleates assembly of the 50S subunit. Functionally, one of the proteins that surrounds the polypeptide exit tunnel on the outside of the subunit. In Streptococcus pyogenes serotype M1, this protein is Large ribosomal subunit protein uL24.